The primary structure comprises 337 residues: 1-aminocyclopropane-1-carboxylate deaminase (337 aa).

Lys-50 carries the post-translational modification N6-(pyridoxal phosphate)lysine.

This sequence belongs to the ACC deaminase/D-cysteine desulfhydrase family. In terms of assembly, homotrimer. The cofactor is pyridoxal 5'-phosphate.

The catalysed reaction is 1-aminocyclopropane-1-carboxylate + H2O = 2-oxobutanoate + NH4(+). Functionally, catalyzes a cyclopropane ring-opening reaction, the irreversible conversion of 1-aminocyclopropane-1-carboxylate (ACC) to ammonia and alpha-ketobutyrate. Allows growth on ACC as a nitrogen source. This chain is 1-aminocyclopropane-1-carboxylate deaminase, found in Mesorhizobium japonicum (strain LMG 29417 / CECT 9101 / MAFF 303099) (Mesorhizobium loti (strain MAFF 303099)).